Consider the following 232-residue polypeptide: Triosephosphate isomerase (232 aa).

Asn6 to Lys8 contributes to the substrate binding site. His91 acts as the Electrophile in catalysis. The active-site Proton acceptor is the Glu158. 2 residues coordinate substrate: Gly164 and Ser194.

This sequence belongs to the triosephosphate isomerase family. As to quaternary structure, homodimer.

The protein resides in the cytoplasm. The enzyme catalyses D-glyceraldehyde 3-phosphate = dihydroxyacetone phosphate. The protein operates within carbohydrate biosynthesis; gluconeogenesis. It functions in the pathway carbohydrate degradation; glycolysis; D-glyceraldehyde 3-phosphate from glycerone phosphate: step 1/1. Its function is as follows. Involved in the gluconeogenesis. Catalyzes stereospecifically the conversion of dihydroxyacetone phosphate (DHAP) to D-glyceraldehyde-3-phosphate (G3P). This is Triosephosphate isomerase from Campylobacter hominis (strain ATCC BAA-381 / DSM 21671 / CCUG 45161 / LMG 19568 / NCTC 13146 / CH001A).